The following is a 726-amino-acid chain: Beta-adducin (726 aa).

Positions 1-25 (MSEETVPEAASPPPPQGQPYFDRFS) are disordered. A phosphoserine mark is found at serine 11 and serine 25. A Phosphothreonine; by PKA modification is found at threonine 55. A phosphoserine mark is found at serine 60 and serine 344. An interaction with calmodulin region spans residues 425–444 (KQQKEKTRWLNTPNTYLRVN). Residues 525–726 (AEKSRSPSTE…KSKKKEKVES (202 aa)) are disordered. Serine 530 and serine 532 each carry phosphoserine. Phosphothreonine is present on threonine 533. A Phosphoserine modification is found at serine 535. Basic and acidic residues predominate over residues 566 to 586 (EEYKKEVERKKLELDGEKETA). A compositionally biased stretch (low complexity) spans 588–606 (EEPGSPAKSAPASPVQSPA). A phosphoserine mark is found at serine 592, serine 596, serine 600, and serine 604. Threonine 611 is subject to Phosphothreonine. Serine 613, serine 617, serine 619, and serine 621 each carry phosphoserine. The span at 621-631 (SLEEGTKKTET) shows a compositional bias: basic and acidic residues. The span at 632–645 (SKAATTEPETTQPE) shows a compositional bias: low complexity. Polar residues predominate over residues 665–674 (GLSQMTTSAD). Threonine 675 is subject to Phosphothreonine. Phosphoserine is present on residues serine 686, serine 689, serine 693, serine 697, serine 699, and serine 701. Residues 689–701 (SGPMSPEGSPSKS) are compositionally biased toward low complexity. Basic residues predominate over residues 702–726 (PSKKKKKFRTPSFLKKSKKKEKVES). A Phosphoserine; by PKC modification is found at serine 703. The interval 704-721 (KKKKKFRTPSFLKKSKKK) is interaction with calmodulin. A Phosphoserine; by PKA and PKC modification is found at serine 713.

Belongs to the aldolase class II family. Adducin subfamily. Heterodimer of an alpha and a beta subunit. Found in a complex with ADD2, DMTN and SLC2A1. Interacts with SLC2A1. The N-terminus is blocked. Expressed mainly in brain, spleen, kidney cortex and medulla, and heart. Also expressed in human umbilical vein endothelial cells, human vascular smooth muscle cells, kidney tubular cells and K-562 cell line.

The protein localises to the cytoplasm. It localises to the cytoskeleton. The protein resides in the cell membrane. Membrane-cytoskeleton-associated protein that promotes the assembly of the spectrin-actin network. Binds to the erythrocyte membrane receptor SLC2A1/GLUT1 and may therefore provide a link between the spectrin cytoskeleton to the plasma membrane. Binds to calmodulin. Calmodulin binds preferentially to the beta subunit. In Homo sapiens (Human), this protein is Beta-adducin (ADD2).